A 223-amino-acid chain; its full sequence is Endonuclease NucS (223 aa).

Belongs to the NucS endonuclease family.

It localises to the cytoplasm. Cleaves both 3' and 5' ssDNA extremities of branched DNA structures. The polypeptide is Endonuclease NucS (Streptomyces coelicolor (strain ATCC BAA-471 / A3(2) / M145)).